Consider the following 679-residue polypeptide: Methionine--tRNA ligase (679 aa).

Residues 15-25 (PYANGPVHIGH) carry the 'HIGH' region motif. Zn(2+) contacts are provided by C147, C150, C160, and C163. The short motif at 332–336 (KISTS) is the 'KMSKS' region element. T335 is a binding site for ATP. The tRNA-binding domain maps to 578–679 (DFMKLDIRVG…KEVKPGSEVK (102 aa)).

Belongs to the class-I aminoacyl-tRNA synthetase family. MetG type 1 subfamily. Homodimer. Requires Zn(2+) as cofactor.

It localises to the cytoplasm. It carries out the reaction tRNA(Met) + L-methionine + ATP = L-methionyl-tRNA(Met) + AMP + diphosphate. Its function is as follows. Is required not only for elongation of protein synthesis but also for the initiation of all mRNA translation through initiator tRNA(fMet) aminoacylation. This chain is Methionine--tRNA ligase, found in Parabacteroides distasonis (strain ATCC 8503 / DSM 20701 / CIP 104284 / JCM 5825 / NCTC 11152).